The sequence spans 494 residues: Alpha-amylase-related protein (494 aa).

The N-terminal stretch at 1–20 (MFKFASAVILCVVAASSTLA) is a signal peptide. Residue glutamine 21 is modified to Pyrrolidone carboxylic acid. Cysteine 48 and cysteine 104 form a disulfide bridge. Positions 118, 169, and 178 each coordinate Ca(2+). Cysteine 157 and cysteine 171 are oxidised to a cystine. Arginine 206 provides a ligand contact to chloride. Aspartate 208 functions as the Nucleophile in the catalytic mechanism. Histidine 212 contributes to the Ca(2+) binding site. The active-site Proton donor is the glutamate 245. The chloride site is built by asparagine 308 and arginine 343. Cystine bridges form between cysteine 376-cysteine 382, cysteine 418-cysteine 441, and cysteine 448-cysteine 460.

Belongs to the glycosyl hydrolase 13 family. Monomer. Requires Ca(2+) as cofactor. The cofactor is chloride.

The protein localises to the secreted. The catalysed reaction is Endohydrolysis of (1-&gt;4)-alpha-D-glucosidic linkages in polysaccharides containing three or more (1-&gt;4)-alpha-linked D-glucose units.. In Drosophila varians (Fruit fly), this protein is Alpha-amylase-related protein (Amyrel).